Here is a 391-residue protein sequence, read N- to C-terminus: MSDGNVAWILASTALVMLMVPGVGFFYAGMVRRKNAVNMIALSFISLIITVLLWIFYGYSVSFGNDISGIIGGLNYALLSGVKGEDLLFMMYQMMFAAVTIAILTSAIAERAKVSSFILLSALWLTFVYAPFAHWLWGGGWLAKLGALDFAGGMVVHISSGFAALAVAMTIGKRAGFEEYSIEPHSIPLTLIGAALLWFGWFGFNGGSALAANDVAINAVVVTNTSAAVAGFVWMVIGWIKGKPGSLGIVSGAIAGLAAITPAAGFVDVKGAIVIGLVAGIVCYLAMDFRIKKKIDESLDAWAIHGIGGLWGSVAVGILANPEVNGYAGLLFGNPQLLVSQLIAVASTTAYAFLVTLILAKAVDAAVGLRVSSQEEYVGLDLSQHEEVAYT.

The Extracellular segment spans residues 1-7 (MSDGNVA). A helical membrane pass occupies residues 8 to 27 (WILASTALVMLMVPGVGFFY). Over 28–38 (AGMVRRKNAVN) the chain is Cytoplasmic. Residues 39–57 (MIALSFISLIITVLLWIFY) traverse the membrane as a helical segment. Over 58 to 89 (GYSVSFGNDISGIIGGLNYALLSGVKGEDLLF) the chain is Extracellular. The chain crosses the membrane as a helical span at residues 90–106 (MMYQMMFAAVTIAILTS). The Cytoplasmic segment spans residues 107–113 (AIAERAK). Residues 114 to 137 (VSSFILLSALWLTFVYAPFAHWLW) form a helical membrane-spanning segment. The Extracellular portion of the chain corresponds to 138–152 (GGGWLAKLGALDFAG). Residues 153 to 170 (GMVVHISSGFAALAVAMT) form a helical membrane-spanning segment. Over 171-188 (IGKRAGFEEYSIEPHSIP) the chain is Cytoplasmic. Residues 189–208 (LTLIGAALLWFGWFGFNGGS) traverse the membrane as a helical segment. Residues 209–217 (ALAANDVAI) are Extracellular-facing. The chain crosses the membrane as a helical span at residues 218-237 (NAVVVTNTSAAVAGFVWMVI). Residues 238-245 (GWIKGKPG) are Cytoplasmic-facing. The helical transmembrane segment at 246–263 (SLGIVSGAIAGLAAITPA) threads the bilayer. Topologically, residues 264–268 (AGFVD) are extracellular. Residues 269 to 287 (VKGAIVIGLVAGIVCYLAM) traverse the membrane as a helical segment. Over 288 to 300 (DFRIKKKIDESLD) the chain is Cytoplasmic. The helical transmembrane segment at 301–319 (AWAIHGIGGLWGSVAVGIL) threads the bilayer. At 320-337 (ANPEVNGYAGLLFGNPQL) the chain is on the extracellular side. The helical transmembrane segment at 338–363 (LVSQLIAVASTTAYAFLVTLILAKAV) threads the bilayer. Over 364–391 (DAAVGLRVSSQEEYVGLDLSQHEEVAYT) the chain is Cytoplasmic.

This sequence belongs to the ammonia transporter channel (TC 1.A.11.2) family. Homotrimer.

The protein localises to the cell membrane. In terms of biological role, involved in the uptake of ammonium/ammonia (NH(4)(+)/NH(3)). Transport is electrogenic. Transport the ammonium and methylammonium cation with high specificity. This chain is Ammonium transporter Amt1, found in Archaeoglobus fulgidus (strain ATCC 49558 / DSM 4304 / JCM 9628 / NBRC 100126 / VC-16).